The sequence spans 520 residues: N-acetylgalactosamine-6-sulfatase (520 aa).

Residues 1–23 (MAACTAAQQLLLVLSALGLLAAG) form the signal peptide. A catalytic domain region spans residues 24 to 377 (APQPPNIVLL…PTMLKGQMMD (354 aa)). Residues Asp-36, Asp-37, and Cys-76 each coordinate Ca(2+). Cys-76 serves as the catalytic Nucleophile. Cys-76 bears the 3-oxoalanine (Cys) mark. His-139 is an active-site residue. Residue Asn-201 is glycosylated (N-linked (GlcNAc...) asparagine). Residues Asp-286 and Asn-287 each contribute to the Ca(2+) site. The cysteines at positions 306 and 417 are disulfide-linked. Residue Asn-421 is glycosylated (N-linked (GlcNAc...) asparagine). 2 cysteine pairs are disulfide-bonded: Cys-487–Cys-516 and Cys-499–Cys-505.

The protein belongs to the sulfatase family. Homodimer. Ca(2+) serves as cofactor. The conversion to 3-oxoalanine (also known as C-formylglycine, FGly), of a serine or cysteine residue in prokaryotes and of a cysteine residue in eukaryotes, is critical for catalytic activity. As to expression, widely expressed. Higher expression in liver and kidney.

The protein localises to the lysosome. It carries out the reaction Hydrolysis of the 6-sulfate groups of the N-acetyl-D-galactosamine 6-sulfate units of chondroitin sulfate and of the D-galactose 6-sulfate units of keratan sulfate.. This is N-acetylgalactosamine-6-sulfatase (Galns) from Mus musculus (Mouse).